Consider the following 437-residue polypeptide: Transcription factor ets-4 (437 aa).

The tract at residues 1 to 30 (MNGTGSVGHRWNSLSPEPHSGTESTASTPF) is disordered. The segment covering 21-30 (GTESTASTPF) has biased composition (polar residues). Lys-32 participates in a covalent cross-link: Glycyl lysine isopeptide (Lys-Gly) (interchain with G-Cter in SUMO). Ser-73 is modified (phosphoserine). Residue Lys-83 forms a Glycyl lysine isopeptide (Lys-Gly) (interchain with G-Cter in SUMO) linkage. The PNT domain occupies 120–202 (HLIQDISTTC…AQLQVWKTGT (83 aa)). The disordered stretch occupies residues 275–302 (QGTVLPSPSNSDTSSNGSSQDMNDDDID). Over residues 280–293 (PSPSNSDTSSNGSS) the composition is skewed to low complexity. The ETS DNA-binding region spans 349 to 432 (VHLWQFIREL…KKQRLVYKFL (84 aa)).

This sequence belongs to the ETS family. In terms of assembly, may interact with cebp-1. May interact with tdpt-1 to facilitate its sumoylation. Post-translationally, phosphorylation is required for axon regeneration. In terms of processing, sumoylated; sumoylation inhibits phosphorylation, which is required for probable interaction with cebp-1 and consequently the expression of svh-2. In terms of tissue distribution, expressed in cells of the anterior and posterior bulbs of the pharynx, seam cells, a few unidentified cells of the vulva, the hypodermis, several unidentified neurons, labial socket cells of the head and rectal cells.

The protein localises to the nucleus. Transcription factor which binds to 5'-GGAA/T-3' DNA consensus sequences. Both positively and negatively regulates the expression of target genes. Plays a role in the regulation of adult lifespan, which may in part be through modulation of daf-16 activity. Regulates the expression of genes such as svh-2 in response to axon injury and in addition, may function downstream of the cAMP signaling pathway to promote axon regeneration. Regulates the expression of lipid metabolism genes and may also control the expression of the RNA-binding protein rege-1 which too has been implicated in the control of fat accumulation. This chain is Transcription factor ets-4, found in Caenorhabditis elegans.